The chain runs to 92 residues: Alpha-elapitoxin-Lh2a (92 aa).

A signal peptide spans 1–21 (MKTLLLTLVVVTIVCLDLGDS). Disulfide bonds link cysteine 24–cysteine 41, cysteine 34–cysteine 62, cysteine 47–cysteine 51, cysteine 66–cysteine 77, and cysteine 78–cysteine 83.

This sequence belongs to the three-finger toxin family. Long-chain subfamily. Type II alpha-neurotoxin sub-subfamily. Expressed by the venom gland.

The protein localises to the secreted. In terms of biological role, binds with high affinity to muscular (alpha-1/CHRNA1) and neuronal (alpha-7/CHRNA7) nicotinic acetylcholine receptor (nAChR) and inhibits acetylcholine from binding to the receptor, thereby impairing neuromuscular and neuronal transmission. The protein is Alpha-elapitoxin-Lh2a of Hydrophis hardwickii (Hardwick's spine-bellied seasnake).